The following is a 634-amino-acid chain: Kelch-like protein 22 (634 aa).

The residue at position 2 (alanine 2) is an N-acetylalanine. The BTB domain maps to 50-117 (FDVVLVVEGR…IYTSELELSL (68 aa)). Kelch repeat units follow at residues 299–349 (CVVG…VLNN), 350–399 (FVYL…VVGK), 400–446 (YIYA…TLQG), 448–493 (MYIT…ALLD), 494–544 (KLFV…VLDN), and 545–593 (RIYV…VLTL). At threonine 463 the chain carries Phosphothreonine. Residue tyrosine 466 is modified to Phosphotyrosine. The residue at position 475 (threonine 475) is a Phosphothreonine. A disordered region spans residues 600–634 (EQPRGTPNRSQADADFASEVMSVSDWEEFDNSSED). Phosphothreonine is present on threonine 605. A compositionally biased stretch (acidic residues) spans 624-634 (DWEEFDNSSED).

In terms of assembly, component of the BCR(KLHL22) E3 ubiquitin ligase complex, at least composed of CUL3, KLHL22 and RBX1. Interacts with PLK1. Interacts with DEPDC5 (via DEP domain); the interaction depends on amino acid availability. Interacts with YWHAE; required for the nuclear localization of KLHL22 upon amino acid starvation.

It localises to the cytoplasm. Its subcellular location is the cytosol. The protein localises to the cytoskeleton. It is found in the microtubule organizing center. The protein resides in the centrosome. It localises to the spindle. Its subcellular location is the nucleus. The protein localises to the lysosome. Its pathway is protein modification; protein ubiquitination. Functionally, substrate-specific adapter of a BCR (BTB-CUL3-RBX1) E3 ubiquitin ligase complex required for chromosome alignment and localization of PLK1 at kinetochores. The BCR(KLHL22) ubiquitin ligase complex mediates monoubiquitination of PLK1, leading to PLK1 dissociation from phosphoreceptor proteins and subsequent removal from kinetochores, allowing silencing of the spindle assembly checkpoint (SAC) and chromosome segregation. Monoubiquitination of PLK1 does not lead to PLK1 degradation. The BCR(KLHL22) ubiquitin ligase complex is also responsible for the amino acid-stimulated 'Lys-48' polyubiquitination and proteasomal degradation of DEPDC5. Through the degradation of DEPDC5, releases the GATOR1 complex-mediated inhibition of the TORC1 pathway. It is therefore an amino acid-dependent activator within the amino acid-sensing branch of the TORC1 pathway, indirectly regulating different cellular processes including cell growth and autophagy. The polypeptide is Kelch-like protein 22 (Rattus norvegicus (Rat)).